We begin with the raw amino-acid sequence, 1587 residues long: NHS-like protein 1 (1587 aa).

Ser24 carries the post-translational modification Phosphoserine. Disordered regions lie at residues 140 to 163 (FAAG…KCSL) and 176 to 202 (RPKT…PLPT). A compositionally biased stretch (polar residues) spans 179 to 196 (TPTSGDFSDLHTQTNWTK). Ser197 and Ser328 each carry phosphoserine. Positions 431-446 (SAGQLDSRTPGSSSYS) are enriched in polar residues. Disordered regions lie at residues 431 to 470 (SAGQ…PRHH) and 549 to 584 (SEPW…VSSC). The span at 449–470 (KPRDRPTPRCSVKDDHQSPRHH) shows a compositional bias: basic and acidic residues. Ser563 carries the phosphoserine modification. Residues 573 to 584 (GCSTPTSNVSSC) show a composition bias toward polar residues. Ser629 is subject to Phosphoserine. Disordered stretches follow at residues 661–687 (KAKK…QTNG), 705–767 (SLPG…SSVK), and 789–1059 (NPTG…RPPM). Residues 705 to 720 (SLPGKGGSSPSQSPCS) show a composition bias toward low complexity. Polar residues-rich tracts occupy residues 730–750 (SRSQ…TPNV), 757–767 (TPSQSDTSSVK), 792–801 (GGCSANTEAA), and 838–855 (RVTS…TPTA). Over residues 885–911 (SLISSMSISSSSTSLSSNTSTEGSGTM) the composition is skewed to low complexity. 3 stretches are compositionally biased toward pro residues: residues 923–934 (APPPPPLPPLPS), 958–972 (PLPP…PPEA), and 998–1021 (SLPP…PPLD). Residues 1040-1055 (SSREALRRPANKEEGC) show a composition bias toward basic and acidic residues. At Ser1079 the chain carries Phosphoserine. Disordered stretches follow at residues 1083-1534 (AVLF…ARRA) and 1565-1587 (VDGI…EQKS). Composition is skewed to polar residues over residues 1089 to 1099 (PSAQEQRTPTA) and 1112 to 1141 (SRNS…SQSQ). 2 positions are modified to phosphoserine: Ser1157 and Ser1218. Over residues 1222 to 1234 (AEGEAVRSQEEKS) the composition is skewed to basic and acidic residues. Polar residues predominate over residues 1275–1285 (QPNTSPGPTQE). The span at 1360–1370 (GRKDSEDDHTR) shows a compositional bias: basic and acidic residues. Ser1373 and Ser1375 each carry phosphoserine. Position 1379 is a phosphothreonine (Thr1379). Polar residues predominate over residues 1392–1409 (QVGSIQRSIKKSTTSSDN). Residues 1434 to 1447 (KSTDPRFQRSRSEP) are compositionally biased toward basic and acidic residues. 2 stretches are compositionally biased toward low complexity: residues 1448–1460 (SADS…SCSP) and 1484–1503 (SGPR…SRYS). Positions 1576-1587 (PSEQCGGTEQKS) are enriched in polar residues.

It belongs to the NHS family.

This is NHS-like protein 1 (Nhsl1) from Mus musculus (Mouse).